We begin with the raw amino-acid sequence, 128 residues long: Fluoride-specific ion channel FluC (128 aa).

A run of 4 helical transmembrane segments spans residues 8–28 (IIFI…LGLL), 38–58 (LGTL…LAFF), 71–91 (FFVT…AEVI), and 103–123 (LMLA…GVFI). The Na(+) site is built by Gly-78 and Thr-81.

The protein belongs to the fluoride channel Fluc/FEX (TC 1.A.43) family.

Its subcellular location is the cell inner membrane. The enzyme catalyses fluoride(in) = fluoride(out). Na(+) is not transported, but it plays an essential structural role and its presence is essential for fluoride channel function. Its function is as follows. Fluoride-specific ion channel. Important for reducing fluoride concentration in the cell, thus reducing its toxicity. This Pasteurella multocida (strain Pm70) protein is Fluoride-specific ion channel FluC.